The chain runs to 157 residues: 2-C-methyl-D-erythritol 2,4-cyclodiphosphate synthase (157 aa).

A divalent metal cation contacts are provided by Asp8 and His10. 4-CDP-2-C-methyl-D-erythritol 2-phosphate-binding positions include 8–10 and 34–35; these read DVH and HS. A divalent metal cation is bound at residue His42. 4-CDP-2-C-methyl-D-erythritol 2-phosphate-binding positions include 56–58, 61–65, 100–106, 132–135, Phe139, and Arg142; these read DIG, FPDTD, AQAPKMA, and TTTE.

The protein belongs to the IspF family. As to quaternary structure, homotrimer. A divalent metal cation is required as a cofactor.

The catalysed reaction is 4-CDP-2-C-methyl-D-erythritol 2-phosphate = 2-C-methyl-D-erythritol 2,4-cyclic diphosphate + CMP. The protein operates within isoprenoid biosynthesis; isopentenyl diphosphate biosynthesis via DXP pathway; isopentenyl diphosphate from 1-deoxy-D-xylulose 5-phosphate: step 4/6. Its function is as follows. Involved in the biosynthesis of isopentenyl diphosphate (IPP) and dimethylallyl diphosphate (DMAPP), two major building blocks of isoprenoid compounds. Catalyzes the conversion of 4-diphosphocytidyl-2-C-methyl-D-erythritol 2-phosphate (CDP-ME2P) to 2-C-methyl-D-erythritol 2,4-cyclodiphosphate (ME-CPP) with a corresponding release of cytidine 5-monophosphate (CMP). This Serratia proteamaculans (strain 568) protein is 2-C-methyl-D-erythritol 2,4-cyclodiphosphate synthase.